The following is a 404-amino-acid chain: MISNFSRLQNIYNILFILFISLPGGLIYLLTGSTLSFWLRESGFDKITIGLFSLVNFIHIFKFLWGPLLEKISFIPSNSRGYKYCLIFSLLSCICCVYILTGFNPTTNFISFSLCLIILAFFSSIYDMLLQSSQMLLINNKNWGISEAACTSGFRIGILISGSGALYLSTIISWQEVYRTMAILCVPSLLLIIFYPLKFKEKIAVNDFDRFWHAFYDFIKKPKWLIIVGFMLLYRLQDNFLAVMPNMFYLDIGYTKKDLALGYKAFGMCATIAGGFIGGFLCRKYEYTYIFKRVLVYHALSSITFLLLYSYSQTITTLYIAVFLQEFTKGLTMSPFFSYQLRCCSSKYCITQIALITSIAYISTVLFGSISGYAATYLGWGYFFAIASFCFIPAYILIRYLPRV.

Transmembrane regions (helical) follow at residues 11–31, 49–69, 84–104, 109–129, 154–174, 177–197, 224–244, 261–281, 294–311, 315–337, 353–373, and 378–398; these read IYNI…YLLT, IGLF…GPLL, YCLI…TGFN, FISF…YDML, FRIG…IISW, VYRT…FYPL, WLII…LAVM, LGYK…GGFL, VLVY…LYSY, ITTL…SPFF, IALI…ISGY, and LGWG…YILI.

Belongs to the major facilitator superfamily.

The protein resides in the cell inner membrane. This chain is Putative transporter AmpG 2 (ampG2), found in Rickettsia bellii (strain RML369-C).